The sequence spans 451 residues: Phosphoglucosamine mutase (451 aa).

The active-site Phosphoserine intermediate is serine 102. Mg(2+)-binding residues include serine 102, aspartate 243, aspartate 245, and aspartate 247. Serine 102 bears the Phosphoserine mark.

The protein belongs to the phosphohexose mutase family. The cofactor is Mg(2+). Activated by phosphorylation.

The catalysed reaction is alpha-D-glucosamine 1-phosphate = D-glucosamine 6-phosphate. In terms of biological role, catalyzes the conversion of glucosamine-6-phosphate to glucosamine-1-phosphate. The polypeptide is Phosphoglucosamine mutase (Sinorhizobium medicae (strain WSM419) (Ensifer medicae)).